The chain runs to 161 residues: Myosin regulatory light chain A, smooth adductor muscle (161 aa).

Ala-1 is modified (blocked amino end (Ala)). 2 EF-hand domains span residues 20-55 and 89-124; these read KLMQEMKEAFTMIDQNRDGFIDINDLKEMFSSLGRT and DTEETLRNAFAMFDELDTKKLNIEYIKDLLENMGDN. Asp-33, Asn-35, Asp-37, and Asp-44 together coordinate Ca(2+).

In terms of biological role, in molluscan muscle, calcium regulation is associated with myosin rather than with actin. Muscle myosin contains two types of light chains: the catalytic light chain, essential for ATPase activity, and the regulatory light chain, a calcium-binding protein responsible for Ca(2+) dependent binding and Ca(2+) dependent Mg-ATPase activity. The polypeptide is Myosin regulatory light chain A, smooth adductor muscle (Mizuhopecten yessoensis (Japanese scallop)).